A 1603-amino-acid polypeptide reads, in one-letter code: GATOR1 complex protein DEPDC5 (1603 aa).

3 disordered regions span residues 427 to 450 (GKKP…KESE), 484 to 527 (VRER…SSLG), and 696 to 720 (LSNS…VSTS). The segment covering 430–439 (PASEKAKNGR) has biased composition (basic and acidic residues). Residues 494–508 (SASSCDVSSSPSLPS) show a composition bias toward low complexity. Ser-505 is subject to Phosphoserine. Polar residues-rich tracts occupy residues 518-527 (SQASDDSSLG) and 696-707 (LSNSGAGMNPRT). Ser-1002 bears the Phosphoserine; by PIM1 mark. The segment covering 1135–1153 (DRGNSQTFGNSQNIGEQGY) has biased composition (polar residues). The disordered stretch occupies residues 1135-1165 (DRGNSQTFGNSQNIGEQGYSSTNSSDSSSQQ). Over residues 1154–1165 (SSTNSSDSSSQQ) the composition is skewed to low complexity. The DEP domain occupies 1187–1262 (PSTGVQLLSE…YGFYFYKIVT (76 aa)). Ser-1530 bears the Phosphoserine; by PKB/AKT1 and PIM1 mark.

Belongs to the IML1 family. Within the GATOR complex, component of the GATOR1 subcomplex, made of DEPDC5, NPRL2 and NPRL3. GATOR1 mediates the strong interaction of the GATOR complex with small GTPases Rag (RagA/RRAGA, RagB/RRAGB, RagC/RRAGC and/or RagD/RRAGD) heterodimers. Interacts with SAMTOR; interaction is direct and takes place in presence of methionine, leading to inhibit the activity of the GATOR1 complex. Post-translationally, phosphorylation at Ser-1002 and Ser-1530 by AKT1 and PIM1 inhibit the activity of DEPDC5, releasing inhibition of the mTORC1 pathway. In terms of processing, ubiquitinated. Amino acid-induced 'Lys-48'-linked polyubiquitination of DEPDC5 by the BCR(KLHL22) ubiquitin ligase complex leads to DEPDC5 proteasomal degradation and inhibition of the GATOR1 complex. Ubiquitination may occur at multiple lysines. Expressed in developing and adult brain.

It is found in the lysosome membrane. The protein localises to the cytoplasm. The protein resides in the cytosol. Its subcellular location is the perinuclear region. Functionally, as a component of the GATOR1 complex functions as an inhibitor of the amino acid-sensing branch of the mTORC1 pathway. In response to amino acid depletion, the GATOR1 complex has GTPase activating protein (GAP) activity and strongly increases GTP hydrolysis by RagA/RRAGA (or RagB/RRAGB) within heterodimeric Rag complexes, thereby turning them into their inactive GDP-bound form, releasing mTORC1 from lysosomal surface and inhibiting mTORC1 signaling. In the presence of abundant amino acids, the GATOR1 complex is negatively regulated by GATOR2, the other GATOR subcomplex, in this amino acid-sensing branch of the TORC1 pathway. Within the GATOR1 complex, DEPDC5 mediates direct interaction with the nucleotide-binding pocket of small GTPases Rag (RagA/RRAGA, RagB/RRAGB, RagC/RRAGC and/or RagD/RRAGD) and coordinates their nucleotide loading states by promoting RagA/RRAGA or RagB/RRAGB into their GDP-binding state and RagC/RRAGC or RagD/RRAGD into their GTP-binding state. However, it does not execute the GAP activity, which is mediated by NPRL2. In Homo sapiens (Human), this protein is GATOR1 complex protein DEPDC5.